Consider the following 195-residue polypeptide: Ras-related protein Rab-31 (195 aa).

Glycine 16, glycine 18, lysine 19, serine 20, serine 21, aspartate 32, and histidine 33 together coordinate GTP. Serine 20 lines the Mg(2+) pocket. Short sequence motifs (switch) lie at residues histidine 30 to serine 42 and alanine 63 to serine 79. Serine 36 is modified (phosphoserine). GTP contacts are provided by threonine 38, glycine 64, asparagine 119, aspartate 122, alanine 150, and lysine 151. Threonine 38 contacts Mg(2+). The segment at proline 168–cysteine 195 is disordered. Polar residues predominate over residues glycine 184–cysteine 195. Residues cysteine 194 and cysteine 195 are each lipidated (S-geranylgeranyl cysteine).

Belongs to the small GTPase superfamily. Rab family. Interacts with OCRL. Interacts (in GDP-bound form) with RIN3 and GAPVD1, which function as guanine exchange factors (GEF). Interacts with EGFR. Interacts with NGFR. Interacts (in GTP-bound form) with EEA1. Interacts (in GTP-bound form) with APPL2; interaction contributes to or enhances recruitment of APPL2 to the phagosomes; interaction enhances Fc-gamma receptor-mediated phagocytosis through PI3K/Akt signaling in macrophages. It depends on Mg(2+) as a cofactor. As to expression, detected in brain astrocytes (at protein level).

The protein resides in the early endosome. Its subcellular location is the golgi apparatus. It is found in the trans-Golgi network. It localises to the trans-Golgi network membrane. The protein localises to the cytoplasmic vesicle. The protein resides in the phagosome. Its subcellular location is the phagosome membrane. The catalysed reaction is GTP + H2O = GDP + phosphate + H(+). Regulated by guanine nucleotide exchange factors (GEFs) including RIN3 and GAPVD1 which promote the exchange of bound GDP for free GTP. Regulated by GTPase activating proteins (GAPs) which increase the GTP hydrolysis activity. Inhibited by GDP dissociation inhibitors (GDIs) which prevent Rab-GDP dissociation. Functionally, the small GTPases Rab are key regulators of intracellular membrane trafficking, from the formation of transport vesicles to their fusion with membranes. Rabs cycle between an inactive GDP-bound form and an active GTP-bound form that is able to recruit to membranes different set of downstream effectors directly responsible for vesicle formation, movement, tethering and fusion. Required for the integrity and for normal function of the Golgi apparatus and the trans-Golgi network. Plays a role in insulin-stimulated translocation of GLUT4 to the cell membrane. Plays a role in the maturation of phagosomes that engulf pathogens, such as S.aureus and Mycobacterium. Plays a role in M6PR transport from the trans-Golgi network to endosomes. Plays a role in the internalization of EGFR from the cell membrane into endosomes. This is Ras-related protein Rab-31 from Mus musculus (Mouse).